The sequence spans 603 residues: DNA mismatch repair protein MutL (603 aa).

This sequence belongs to the DNA mismatch repair MutL/HexB family.

In terms of biological role, this protein is involved in the repair of mismatches in DNA. It is required for dam-dependent methyl-directed DNA mismatch repair. May act as a 'molecular matchmaker', a protein that promotes the formation of a stable complex between two or more DNA-binding proteins in an ATP-dependent manner without itself being part of a final effector complex. The chain is DNA mismatch repair protein MutL from Nitrobacter winogradskyi (strain ATCC 25391 / DSM 10237 / CIP 104748 / NCIMB 11846 / Nb-255).